We begin with the raw amino-acid sequence, 434 residues long: Trigger factor (434 aa).

The region spanning 160–245 is the PPIase FKBP-type domain; it reads GDKVKMNFVG…LTEVLAANLP (86 aa).

It belongs to the FKBP-type PPIase family. Tig subfamily.

The protein resides in the cytoplasm. It carries out the reaction [protein]-peptidylproline (omega=180) = [protein]-peptidylproline (omega=0). In terms of biological role, involved in protein export. Acts as a chaperone by maintaining the newly synthesized protein in an open conformation. Functions as a peptidyl-prolyl cis-trans isomerase. This Shewanella sp. (strain MR-4) protein is Trigger factor.